Reading from the N-terminus, the 179-residue chain is Bifunctional protein PyrR (179 aa).

Positions 100–112 (VILVDDVLFTGRT) match the PRPP-binding motif.

Belongs to the purine/pyrimidine phosphoribosyltransferase family. PyrR subfamily. In terms of assembly, homodimer and homohexamer; in equilibrium.

It catalyses the reaction UMP + diphosphate = 5-phospho-alpha-D-ribose 1-diphosphate + uracil. Regulates transcriptional attenuation of the pyrimidine nucleotide (pyr) operon by binding in a uridine-dependent manner to specific sites on pyr mRNA. This disrupts an antiterminator hairpin in the RNA and favors formation of a downstream transcription terminator, leading to a reduced expression of downstream genes. In terms of biological role, also displays a weak uracil phosphoribosyltransferase activity which is not physiologically significant. The protein is Bifunctional protein PyrR of Geobacillus thermodenitrificans (strain NG80-2).